The chain runs to 276 residues: MVVKIGILKCGNIGMSPIIDLCLDERADRNDIDVRVLGSGAKMNPDQVEEVSKKMVEEKPDFIVYIGPNPAAPGPKKAREILAASGIPSVIIGDAPGIKDKDAMAEQGLGYVLIKCDPMIGARRQFLDPVEMAMFNADVIRVLAGTGALRVVQNAIDEMVFAVEEGKEISLPKIVITEQKAVDAMDFANPYAKAKAMAAFVMAEKTADIDVKGCFMTKEMEKYIPIVASAHETIRYAAKMVDEARELEKATDAVSRKPHAGDGKILNKCKLMEKPE.

It belongs to the MTD family.

The catalysed reaction is 5,10-methylenetetrahydromethanopterin + oxidized coenzyme F420-(gamma-L-Glu)(n) + 2 H(+) = 5,10-methenyl-5,6,7,8-tetrahydromethanopterin + reduced coenzyme F420-(gamma-L-Glu)(n). Its pathway is one-carbon metabolism; methanogenesis from CO(2); 5,10-methylene-5,6,7,8-tetrahydromethanopterin from 5,10-methenyl-5,6,7,8-tetrahydromethanopterin (coenzyme F420 route): step 1/1. Its function is as follows. Catalyzes the reversible reduction of methenyl-H(4)MPT(+) to methylene-H(4)MPT. This is F420-dependent methylenetetrahydromethanopterin dehydrogenase from Methanococcus vannielii (strain ATCC 35089 / DSM 1224 / JCM 13029 / OCM 148 / SB).